Consider the following 421-residue polypeptide: Testin (421 aa).

Positions 92–199 (MILTNPVAAK…GDVKLPCEMD (108 aa)) constitute a PET domain. The segment at 133–164 (EKQPVAGSEGAQYRKKQLAKQLPAHDQDPSKC) is disordered. Basic and acidic residues predominate over residues 155-164 (PAHDQDPSKC). LIM zinc-binding domains follow at residues 234 to 297 (YSCY…CDSE), 299 to 359 (PRCA…NHAV), and 362 to 421 (QGCH…KMMS).

The protein belongs to the prickle / espinas / testin family. Interacts via LIM domain 1 with ZYX. Interacts (via LIM domain 3) with ENAH and VASP. Interacts with ALKBH4, talin, actin, alpha-actinin, GRIP1 and PXN. Interacts (via LIM domain 2) with ACTL7A (via N-terminus). Heterodimer with ACTL7A; the heterodimer interacts with ENAH to form a heterotrimer.

The protein resides in the cytoplasm. It is found in the cell junction. The protein localises to the focal adhesion. Its function is as follows. Scaffold protein that may play a role in cell adhesion, cell spreading and in the reorganization of the actin cytoskeleton. Plays a role in the regulation of cell proliferation. May act as a tumor suppressor. The polypeptide is Testin (TES) (Colobus guereza (Mantled guereza)).